A 63-amino-acid polypeptide reads, in one-letter code: Beta-defensin 3 (63 aa).

The N-terminal stretch at 1–20 is a signal peptide; it reads MRIHYLLFSFLLVLLSPLSA. Residues 21 to 22 constitute a propeptide that is removed on maturation; it reads FS. 3 cysteine pairs are disulfide-bonded: Cys31-Cys59, Cys38-Cys52, and Cys42-Cys60.

This sequence belongs to the beta-defensin family.

The protein resides in the secreted. Its function is as follows. Has bactericidal activity. This chain is Beta-defensin 3 (Defb3), found in Rattus norvegicus (Rat).